The sequence spans 198 residues: Undecaprenyl phosphate transporter A (198 aa).

Transmembrane regions (helical) follow at residues 15–35, 47–67, 107–127, 135–155, and 169–189; these read MGYA…EIVL, IGFI…QIFI, VVFS…PAGI, FVVL…YLGI, and GTYT…YFVI.

This sequence belongs to the DedA family.

The protein resides in the cell membrane. Its function is as follows. Flippase that catalyzes the transport of undecaprenyl phosphate (UndP) across the cytoplasmic membrane, from the external side to the cytoplasmic side. Is involved in UndP recycling during peptidoglycan synthesis. In Bacillus subtilis (strain 168), this protein is Undecaprenyl phosphate transporter A.